A 775-amino-acid polypeptide reads, in one-letter code: Isopimaradiene synthase (775 aa).

Residues 1–36 constitute a chloroplast transit peptide; the sequence is MFSSSLKLKTNPLMDNKIHRSSSDRDFRGSTISSVK. Asp525, Asp529, Asn669, Gln672, and Glu677 together coordinate Mg(2+). Positions 525 to 529 match the DDXXD motif motif; it reads DDFFD.

This sequence belongs to the terpene synthase family. It depends on Mg(2+) as a cofactor. Ubiquitous expression in roots, stems, leaves and flowers.

The protein resides in the plastid. The protein localises to the chloroplast. It catalyses the reaction (+)-copalyl diphosphate = isopimara-8(14),15-diene + diphosphate. The protein operates within secondary metabolite biosynthesis; terpenoid biosynthesis. In terms of biological role, involved in the biosynthesis of ent-kaurene diterpenoids natural products such as oridonin, miltiradiene, eriocalyxin B and nezukol, known to exhibit antitumor, anti-inflammatory and antibacterial activities. Catalyzes the conversion of (+)-copalyl diphosphate ((+)-CPP) to isopimaradiene. This is Isopimaradiene synthase from Isodon rubescens (Rabdosia rubescens).